The following is a 138-amino-acid chain: MTEGRIQSYRKKIYVIRQKLKAKKPKFLRYDSDKFYRLGRQEKWRRPYGRDNKTRLKVRGFPAIVSVGYRLPKKVRGFHPSGLRQVIVHNVNELVKVQNQKDNVIVTISSSVGFKKRLEILNKARELGLKVSNEGVVT.

This sequence belongs to the eukaryotic ribosomal protein eL32 family.

This Saccharolobus solfataricus (strain ATCC 35092 / DSM 1617 / JCM 11322 / P2) (Sulfolobus solfataricus) protein is Large ribosomal subunit protein eL32 (rpl32e).